A 66-amino-acid polypeptide reads, in one-letter code: Sodium/potassium-transporting ATPase subunit gamma (66 aa).

The helical transmembrane segment at 29–46 (GGLIFAGLAFVVGLLILL) threads the bilayer.

Belongs to the FXYD family. In terms of assembly, regulatory subunit of the sodium/potassium-transporting ATPase which is composed of a catalytic alpha subunit, an auxiliary non-catalytic beta subunit and an additional regulatory subunit. Highest levels expressed in the kidney and spleen. Restricted to the basolateral membrane in renal epithelial cells and varies in its level of expression along the nephron.

Its subcellular location is the membrane. Functionally, may be involved in forming the receptor site for cardiac glycoside binding or may modulate the transport function of the sodium ATPase. The chain is Sodium/potassium-transporting ATPase subunit gamma (Fxyd2) from Rattus norvegicus (Rat).